Reading from the N-terminus, the 204-residue chain is Oocyte-specific homeobox protein 1 (204 aa).

Residues Glu-28 to Gly-73 are disordered. Composition is skewed to polar residues over residues Met-37–Ser-54 and Lys-62–Ser-72. Residues Phe-94–Asn-153 constitute a DNA-binding region (homeobox).

The protein belongs to the paired homeobox family. Obox subfamily. As to expression, specifically expressed in oocytes and early embryos.

It is found in the nucleus. In terms of biological role, transcription factor required for zygotic genome activation (ZGA), a critical event in early embryonic development during which the developmental control passes from maternally provided mRNAs to the expression of the zygotic genome after fertilization. Together with other Obox family members, required in early two-cell stage embryos to kick-start the major ZGA wave by facilitating RNA Polymerase II 'pre-configuration', during which RNA Polymerase II relocates from the initial one-cell stage binding targets to ZGA gene promoters and distal enhancers. Mechanistically, promotes recruitment of RNA Polymerase II from (CG-rich) non-ZGA genes to (CG-poor) ZGA genes at the two-cell stage. Binds to regulatory DNA sequences containing a 5'-ACNCCTTTAATCCCAG-3' sequence motif. Most maternal and zygotic Obox family proteins can compensate for one another. In addition to its role in ZGA, promotes embryonic stem cell pluripotency. In Mus musculus (Mouse), this protein is Oocyte-specific homeobox protein 1.